A 445-amino-acid polypeptide reads, in one-letter code: Ubiquitin carboxyl-terminal hydrolase MINDY-3 (445 aa).

The Nucleophile role is filled by Cys51. Phosphoserine is present on Ser125. His287 (proton acceptor) is an active-site residue.

Belongs to the MINDY deubiquitinase family. FAM188 subfamily. Interacts with COPS5. In terms of tissue distribution, widely expressed with high levels in heart, skeletal muscle, and kidney, and low levels in liver and brain. Also expressed in lung (at protein level).

It localises to the nucleus. It catalyses the reaction Thiol-dependent hydrolysis of ester, thioester, amide, peptide and isopeptide bonds formed by the C-terminal Gly of ubiquitin (a 76-residue protein attached to proteins as an intracellular targeting signal).. Hydrolase that can remove 'Lys-48'-linked conjugated ubiquitin from proteins. The polypeptide is Ubiquitin carboxyl-terminal hydrolase MINDY-3 (Homo sapiens (Human)).